The following is a 274-amino-acid chain: NADPH-dependent 7-cyano-7-deazaguanine reductase (274 aa).

80-82 (VES) serves as a coordination point for substrate. NADPH is bound at residue 82 to 83 (SK). C181 acts as the Thioimide intermediate in catalysis. The Proton donor role is filled by D188. 220–221 (HE) is a substrate binding site. Position 249–250 (249–250 (RG)) interacts with NADPH.

The protein belongs to the GTP cyclohydrolase I family. QueF type 2 subfamily. As to quaternary structure, homodimer.

It is found in the cytoplasm. It catalyses the reaction 7-aminomethyl-7-carbaguanine + 2 NADP(+) = 7-cyano-7-deazaguanine + 2 NADPH + 3 H(+). The protein operates within tRNA modification; tRNA-queuosine biosynthesis. In terms of biological role, catalyzes the NADPH-dependent reduction of 7-cyano-7-deazaguanine (preQ0) to 7-aminomethyl-7-deazaguanine (preQ1). The polypeptide is NADPH-dependent 7-cyano-7-deazaguanine reductase (Paraburkholderia xenovorans (strain LB400)).